The primary structure comprises 476 residues: Bifunctional protein HldE (476 aa).

The segment at 1 to 319 is ribokinase; it reads MKVTLPAFEK…EALKSHQGES (319 aa). 195 to 198 is an ATP binding site; it reads NMSE. Residue D264 is part of the active site. Residues 345-476 are cytidylyltransferase; it reads MTNGCFDILH…AIIQNIMSRH (132 aa).

It in the N-terminal section; belongs to the carbohydrate kinase PfkB family. This sequence in the C-terminal section; belongs to the cytidylyltransferase family. In terms of assembly, homodimer.

The catalysed reaction is D-glycero-beta-D-manno-heptose 7-phosphate + ATP = D-glycero-beta-D-manno-heptose 1,7-bisphosphate + ADP + H(+). It catalyses the reaction D-glycero-beta-D-manno-heptose 1-phosphate + ATP + H(+) = ADP-D-glycero-beta-D-manno-heptose + diphosphate. Its pathway is nucleotide-sugar biosynthesis; ADP-L-glycero-beta-D-manno-heptose biosynthesis; ADP-L-glycero-beta-D-manno-heptose from D-glycero-beta-D-manno-heptose 7-phosphate: step 1/4. It functions in the pathway nucleotide-sugar biosynthesis; ADP-L-glycero-beta-D-manno-heptose biosynthesis; ADP-L-glycero-beta-D-manno-heptose from D-glycero-beta-D-manno-heptose 7-phosphate: step 3/4. In terms of biological role, catalyzes the phosphorylation of D-glycero-D-manno-heptose 7-phosphate at the C-1 position to selectively form D-glycero-beta-D-manno-heptose-1,7-bisphosphate. Functionally, catalyzes the ADP transfer from ATP to D-glycero-beta-D-manno-heptose 1-phosphate, yielding ADP-D-glycero-beta-D-manno-heptose. The chain is Bifunctional protein HldE from Shewanella amazonensis (strain ATCC BAA-1098 / SB2B).